The chain runs to 228 residues: Ribonuclease 3 (228 aa).

Positions 7–132 (LSAFMDRLGH…VIAAVYLDAG (126 aa)) constitute an RNase III domain. E45 contacts Mg(2+). D49 is a catalytic residue. Positions 118 and 121 each coordinate Mg(2+). Residue E121 is part of the active site. The 70-residue stretch at 157–226 (DPKTALQEWA…AKALLERLER (70 aa)) folds into the DRBM domain.

This sequence belongs to the ribonuclease III family. In terms of assembly, homodimer. It depends on Mg(2+) as a cofactor.

It is found in the cytoplasm. It catalyses the reaction Endonucleolytic cleavage to 5'-phosphomonoester.. In terms of biological role, digests double-stranded RNA. Involved in the processing of ribosomal RNA precursors and of some mRNAs. Complements an E.coli disruption mutant, but the E.coli enzyme does not cleave R.capsulatus rRNA precursor, showing substrate recognition is different. Probably also processes some mRNAs, and tRNAs when they are encoded in the rRNA operon. Probably processes pre-crRNA and tracrRNA of type II CRISPR loci if present in the organism. This is Ribonuclease 3 (rnc) from Rhodobacter capsulatus (Rhodopseudomonas capsulata).